We begin with the raw amino-acid sequence, 350 residues long: MFIDSVKITLASGDGGKGAVSFRREKHVPLGGPDGGDGGNGGDIIFVCDNNTHTLVNFKGKRELRAQNGAGGMGRNKNGKKGENLELIVPEGTQVIDVQTNEILLDLTKEGQRELFLKGGKGGLGNTHFKHATNQRPDYAQPGIKGESRLVRLELKLIADVGLVGFPNVGKSTLISVVSNAKPEIANYEFTTLTPKLGLVDVDEYNSFVMADIPGIIEGASGGKGLGLAFLKHIERTSFLLFVLDPMRQMPLKEQFIVLRKELEKFSNELFGRKFGIMISKSDSVRLGEEFAEQIALNINELDNYLKEINNPQSFLIKVSSLEKTGLKELKFMLLEEIKTLRNNKKILTI.

The 158-residue stretch at 1–158 (MFIDSVKITL…RLVRLELKLI (158 aa)) folds into the Obg domain. The region spanning 159-339 (ADVGLVGFPN…LKFMLLEEIK (181 aa)) is the OBG-type G domain. GTP is bound by residues 165-172 (GFPNVGKS), 190-194 (FTTLT), 212-215 (DIPG), 280-283 (SKSD), and 320-322 (SSL). Positions 172 and 192 each coordinate Mg(2+).

The protein belongs to the TRAFAC class OBG-HflX-like GTPase superfamily. OBG GTPase family. Monomer. Mg(2+) is required as a cofactor.

The protein localises to the cytoplasm. Its function is as follows. An essential GTPase which binds GTP, GDP and possibly (p)ppGpp with moderate affinity, with high nucleotide exchange rates and a fairly low GTP hydrolysis rate. Plays a role in control of the cell cycle, stress response, ribosome biogenesis and in those bacteria that undergo differentiation, in morphogenesis control. This chain is GTPase Obg, found in Campylobacter jejuni (strain RM1221).